Here is a 768-residue protein sequence, read N- to C-terminus: Gephyrin (768 aa).

The segment at 14 to 166 is MPT Mo-transferase; the sequence is QIRVGVLTVS…LPGSKKGSQE (153 aa). Residues 153 to 348 are interaction with GABARAP; the sequence is LIINLPGSKK…VDITKVARRH (196 aa). Disordered regions lie at residues 194-245 and 273-316; these read DELE…DSSS and TASL…ASRV. The segment covering 200-212 has biased composition (pro residues); that stretch reads PSPPPPLSPPPTT. Residues S201 and S207 each carry the phosphoserine modification. T211 is subject to Phosphothreonine. S213 is subject to Phosphoserine. A lipid anchor (S-palmitoyl cysteine) is attached at C225. The segment covering 274-299 has biased composition (polar residues); it reads ASLSTTPSESPRAQATSRLSTASCPT. Phosphoserine is present on S275. Residues T278 and T279 each carry the phosphothreonine modification. 2 positions are modified to phosphoserine: S281 and S283. C297 carries S-palmitoyl cysteine lipidation. The tract at residues 326–768 is MPT adenylyltransferase; that stretch reads SSKENILRAS…VVDVMVIGRL (443 aa). The residue at position 337 (S337) is a Phosphoserine.

The protein in the N-terminal section; belongs to the MoaB/Mog family. This sequence in the C-terminal section; belongs to the MoeA family. As to quaternary structure, homotrimer, homodimer and homooligomer. Interacts with SRGAP2 (via SH3 domain). Interacts with GLRB. Interacts with GABARAP. Interacts with GABRA3. GABRA3 and GLRB occupy overlapping binding sites. Interacts with ARHGAP32; IQSEC3, INSYN1 and INSYN2A. It depends on Mg(2+) as a cofactor. In terms of processing, phosphorylated. Post-translationally, palmitoylated. Palmitoylation is stimulated by GABA type A receptors activity. Palmitoylation by ZDHHC12 regulates clustering at synapses. As to expression, expressed in tissues including spinal cord, brain, liver, kidney and lung.

The protein resides in the postsynaptic cell membrane. The protein localises to the cell membrane. Its subcellular location is the cytoplasm. It is found in the cytosol. It localises to the cytoskeleton. The protein resides in the cell projection. The protein localises to the dendrite. Its subcellular location is the postsynaptic density. It catalyses the reaction molybdopterin + ATP + H(+) = adenylyl-molybdopterin + diphosphate. It carries out the reaction adenylyl-molybdopterin + molybdate = Mo-molybdopterin + AMP + H(+). Its pathway is cofactor biosynthesis; molybdopterin biosynthesis. With respect to regulation, inhibited by copper and tungsten. In terms of biological role, microtubule-associated protein involved in membrane protein-cytoskeleton interactions. It is thought to anchor the inhibitory glycine receptor (GLYR) to subsynaptic microtubules. Acts as a major instructive molecule at inhibitory synapses, where it also clusters GABA type A receptors. Its function is as follows. Also has a catalytic activity and catalyzes two steps in the biosynthesis of the molybdenum cofactor. In the first step, molybdopterin is adenylated. Subsequently, molybdate is inserted into adenylated molybdopterin and AMP is released. The polypeptide is Gephyrin (Gphn) (Rattus norvegicus (Rat)).